A 316-amino-acid chain; its full sequence is Porphobilinogen deaminase (316 aa).

Position 240 is an S-(dipyrrolylmethanemethyl)cysteine (cysteine 240).

Belongs to the HMBS family. In terms of assembly, monomer. Dipyrromethane serves as cofactor.

The enzyme catalyses 4 porphobilinogen + H2O = hydroxymethylbilane + 4 NH4(+). Its pathway is porphyrin-containing compound metabolism; protoporphyrin-IX biosynthesis; coproporphyrinogen-III from 5-aminolevulinate: step 2/4. Functionally, tetrapolymerization of the monopyrrole PBG into the hydroxymethylbilane pre-uroporphyrinogen in several discrete steps. This Alkaliphilus metalliredigens (strain QYMF) protein is Porphobilinogen deaminase.